The sequence spans 443 residues: Histidinol dehydrogenase (443 aa).

Tyr133, Gln191, and Asn214 together coordinate NAD(+). The substrate site is built by Ser240, Gln262, and His265. Zn(2+) is bound by residues Gln262 and His265. Active-site proton acceptor residues include Glu329 and His330. The substrate site is built by His330, Asp363, Glu417, and His422. Position 363 (Asp363) interacts with Zn(2+). His422 contributes to the Zn(2+) binding site.

It belongs to the histidinol dehydrogenase family. As to quaternary structure, homodimer. It depends on Zn(2+) as a cofactor.

It carries out the reaction L-histidinol + 2 NAD(+) + H2O = L-histidine + 2 NADH + 3 H(+). Its pathway is amino-acid biosynthesis; L-histidine biosynthesis; L-histidine from 5-phospho-alpha-D-ribose 1-diphosphate: step 9/9. Catalyzes the sequential NAD-dependent oxidations of L-histidinol to L-histidinaldehyde and then to L-histidine. The polypeptide is Histidinol dehydrogenase (Yersinia pestis).